The following is a 495-amino-acid chain: Probable cytosol aminopeptidase (495 aa).

The Mn(2+) site is built by K261 and D266. K273 is a catalytic residue. The Mn(2+) site is built by D284, D343, and E345. R347 is an active-site residue.

The protein belongs to the peptidase M17 family. Requires Mn(2+) as cofactor.

It localises to the cytoplasm. The catalysed reaction is Release of an N-terminal amino acid, Xaa-|-Yaa-, in which Xaa is preferably Leu, but may be other amino acids including Pro although not Arg or Lys, and Yaa may be Pro. Amino acid amides and methyl esters are also readily hydrolyzed, but rates on arylamides are exceedingly low.. The enzyme catalyses Release of an N-terminal amino acid, preferentially leucine, but not glutamic or aspartic acids.. Presumably involved in the processing and regular turnover of intracellular proteins. Catalyzes the removal of unsubstituted N-terminal amino acids from various peptides. The chain is Probable cytosol aminopeptidase from Chelativorans sp. (strain BNC1).